Reading from the N-terminus, the 138-residue chain is Acidic phospholipase A2 2 (138 aa).

An N-terminal signal peptide occupies residues 1-16; sequence MRTLWIVAVWLTGVEG. 7 cysteine pairs are disulfide-bonded: Cys42–Cys131, Cys44–Cys60, Cys59–Cys111, Cys65–Cys138, Cys66–Cys104, Cys73–Cys97, and Cys91–Cys102. The Ca(2+) site is built by Tyr43, Gly45, and Gly47. His63 is a catalytic residue. Position 64 (Asp64) interacts with Ca(2+). The active site involves Asp105.

Monomer. It depends on Ca(2+) as a cofactor. In terms of tissue distribution, expressed by the venom gland.

Its subcellular location is the secreted. The catalysed reaction is a 1,2-diacyl-sn-glycero-3-phosphocholine + H2O = a 1-acyl-sn-glycero-3-phosphocholine + a fatty acid + H(+). Functionally, snake venom phospholipase that inhibits ADP- and collagen-induced human platelet aggregation. This inhibition is completely inhibited by abolition of catalytic activity in case of collagen as inducer and partially inhibited in case of ADP as inducer. PLA2 catalyzes the calcium-dependent hydrolysis of the 2-acyl groups in 3-sn-phosphoglycerides. The polypeptide is Acidic phospholipase A2 2 (Macrovipera lebetinus (Levantine viper)).